The sequence spans 757 residues: uncharacterized protein (757 aa).

The S1 motif domain maps to 640-709; it reads GMILEGVVSN…ARKRIALTMR (70 aa). Residues 711-741 are compositionally biased toward basic and acidic residues; it reads DDEPGGAKHKMPSENRSRERTAGRKPQRNDR. A disordered region spans residues 711–757; the sequence is DDEPGGAKHKMPSENRSRERTAGRKPQRNDRAPANSAMADAFAKLKR.

This is an uncharacterized protein from Neisseria meningitidis serogroup B (strain ATCC BAA-335 / MC58).